An 827-amino-acid chain; its full sequence is Beta-galactosidase 1 (827 aa).

Residues 1-25 (MMGRRGSSWCRWWVALLVLAVAADA) form the signal peptide. The Proton donor role is filled by Glu187. 2 N-linked (GlcNAc...) asparagine glycosylation sites follow: Asn198 and Asn249. The active-site Nucleophile is the Glu259. 8 N-linked (GlcNAc...) asparagine glycosylation sites follow: Asn260, Asn366, Asn392, Asn502, Asn520, Asn578, Asn586, and Asn615. The region spanning 746–827 (GEAGDAVTLS…SGVLTVQATC (82 aa)) is the SUEL-type lectin domain.

It belongs to the glycosyl hydrolase 35 family.

The protein localises to the secreted. It localises to the extracellular space. Its subcellular location is the apoplast. The catalysed reaction is Hydrolysis of terminal non-reducing beta-D-galactose residues in beta-D-galactosides.. In Oryza sativa subsp. japonica (Rice), this protein is Beta-galactosidase 1.